A 205-amino-acid chain; its full sequence is Protein MIS12 homolog (205 aa).

Residues 108 to 205 (PYSEEDFQHL…EKESKRLKIS (98 aa)) adopt a coiled-coil conformation.

This sequence belongs to the mis12 family. Component of the MIS12 complex composed of MIS12, DSN1, NSL1 and PMF1. Also interacts with KNL1, CBX3, CBX5, NDC80 and ZWINT.

The protein localises to the chromosome. Its subcellular location is the centromere. It is found in the kinetochore. Its function is as follows. Part of the MIS12 complex which is required for normal chromosome alignment and segregation and for kinetochore formation during mitosis. Essential for proper kinetochore microtubule attachments. This is Protein MIS12 homolog from Homo sapiens (Human).